The following is a 369-amino-acid chain: Mannose-1-phosphate guanylyltransferase catalytic subunit beta (369 aa).

Residues arginine 12 to proline 231 are substrate-binding domain. Residue aspartate 120 participates in GDP-alpha-D-mannose binding. Position 120 (aspartate 120) interacts with Mg(2+). Residue lysine 171 is part of the active site. Aspartate 227 provides a ligand contact to GDP-alpha-D-mannose. Aspartate 227 contributes to the Mg(2+) binding site. Residues tyrosine 254–methionine 369 are hexapeptide repeat domain.

This sequence belongs to the transferase hexapeptide repeat family. In terms of assembly, component of the GMPPA-GMPPB mannose-1-phosphate guanylyltransferase complex composed of 4 Gmppa subunits and 8 Gmppb subunits; the complex is organized into three layers, a central layer made up of 2 Gmppa dimers sandwiched between two layers each made up of 2 Gmppb dimers. Gmppb catalytic activity is reduced when part of the complex and binding of GDP-alpha-D-Mannose by Gmppa induces allosteric feedback inhibition of Gmppb. It depends on Mg(2+) as a cofactor.

The catalysed reaction is alpha-D-mannose 1-phosphate + GTP + H(+) = GDP-alpha-D-mannose + diphosphate. It functions in the pathway nucleotide-sugar biosynthesis; GDP-alpha-D-mannose biosynthesis; GDP-alpha-D-mannose from alpha-D-mannose 1-phosphate (GTP route): step 1/1. Its activity is regulated as follows. Enzyme activity is reduced by incorporation into the GMPPA-GMPPB mannose-1-phosphate guanylyltransferase complex. Allosterically inhibited, when part of the GMPPA-GMPPB complex, by GDP-alpha-D-mannose binding to Gmppa. Catalytic subunit of the GMPPA-GMPPB mannose-1-phosphate guanylyltransferase complex. Catalyzes the formation of GDP-mannose, an essential precursor of glycan moieties of glycoproteins and glycolipids. Can catalyze the reverse reaction in vitro. Together with GMPPA regulates GDP-alpha-D-mannose levels. In Drosophila melanogaster (Fruit fly), this protein is Mannose-1-phosphate guanylyltransferase catalytic subunit beta.